The chain runs to 151 residues: Arginine regulator (151 aa).

This sequence belongs to the ArgR family.

It is found in the cytoplasm. It functions in the pathway amino-acid degradation; L-arginine degradation via ADI pathway. Its function is as follows. Regulates the transcription of the arc operon, involved in arginine catabolism. The sequence is that of Arginine regulator (argR1) from Clostridium perfringens (strain 13 / Type A).